The sequence spans 466 residues: Asparagine--tRNA ligase (466 aa).

This sequence belongs to the class-II aminoacyl-tRNA synthetase family. As to quaternary structure, homodimer.

The protein localises to the cytoplasm. It catalyses the reaction tRNA(Asn) + L-asparagine + ATP = L-asparaginyl-tRNA(Asn) + AMP + diphosphate + H(+). This Photorhabdus laumondii subsp. laumondii (strain DSM 15139 / CIP 105565 / TT01) (Photorhabdus luminescens subsp. laumondii) protein is Asparagine--tRNA ligase.